Here is a 452-residue protein sequence, read N- to C-terminus: UDP-N-acetylmuramoyl-tripeptide--D-alanyl-D-alanine ligase (452 aa).

113–119 (GSNGKTT) serves as a coordination point for ATP.

This sequence belongs to the MurCDEF family. MurF subfamily.

It is found in the cytoplasm. The catalysed reaction is UDP-N-acetyl-alpha-D-muramoyl-L-alanyl-gamma-D-glutamyl-L-lysine + D-alanyl-D-alanine + ATP = UDP-N-acetyl-alpha-D-muramoyl-L-alanyl-gamma-D-glutamyl-L-lysyl-D-alanyl-D-alanine + ADP + phosphate + H(+). It functions in the pathway cell wall biogenesis; peptidoglycan biosynthesis. Involved in cell wall formation. Catalyzes the final step in the synthesis of UDP-N-acetylmuramoyl-pentapeptide, the precursor of murein. Catalyzes the addition of D-alanyl-D-alanine to UDP-MurNAc-L-alanyl-gamma-D-glutamyl-L-lysine. In vitro, can also use the mesodiaminopimelic acid-containing form of UDP-MurNAc-tripeptide, with the same efficiency, revealing that the discrimination for the amino acid residue at the third position of the peptide in the peptidoglycans is entirely supported by MurE. The protein is UDP-N-acetylmuramoyl-tripeptide--D-alanyl-D-alanine ligase of Staphylococcus aureus (strain NCTC 8325 / PS 47).